We begin with the raw amino-acid sequence, 130 residues long: Small ribosomal subunit protein uS9 (130 aa).

This sequence belongs to the universal ribosomal protein uS9 family.

The protein is Small ribosomal subunit protein uS9 of Streptococcus uberis (strain ATCC BAA-854 / 0140J).